Reading from the N-terminus, the 195-residue chain is Imidazoleglycerol-phosphate dehydratase (195 aa).

This sequence belongs to the imidazoleglycerol-phosphate dehydratase family.

Its subcellular location is the cytoplasm. It carries out the reaction D-erythro-1-(imidazol-4-yl)glycerol 3-phosphate = 3-(imidazol-4-yl)-2-oxopropyl phosphate + H2O. The protein operates within amino-acid biosynthesis; L-histidine biosynthesis; L-histidine from 5-phospho-alpha-D-ribose 1-diphosphate: step 6/9. The protein is Imidazoleglycerol-phosphate dehydratase of Paraburkholderia phytofirmans (strain DSM 17436 / LMG 22146 / PsJN) (Burkholderia phytofirmans).